The chain runs to 168 residues: Peptidyl-Lys metalloendopeptidase (168 aa).

Cystine bridges form between Cys6/Cys76 and Cys78/Cys98. A Zn(2+)-binding site is contributed by His118. Glu119 is a catalytic residue. Residues His122 and Asp131 each coordinate Zn(2+).

Zn(2+) serves as cofactor.

The protein localises to the secreted. It carries out the reaction Preferential cleavage in proteins: -Xaa-|-Lys- (in which Xaa may be Pro).. Inhibited by chelating agents such as EDTA and 1,10-phenanthroline. The sequence is that of Peptidyl-Lys metalloendopeptidase (MEP) from Pleurotus ostreatus (Oyster mushroom).